The sequence spans 992 residues: Disks large-associated protein 4 (992 aa).

Basic and acidic residues predominate over residues 1–20 (MKGLGDSRPRHLSDSLDPPH). 2 disordered regions span residues 1-31 (MKGL…DRNP) and 157-225 (MEGT…PASG). Gly residues predominate over residues 162 to 171 (GKVGGNGSKK). Residues 172 to 194 (GGLEDGKGRRAKSKERAKAGEPK) are compositionally biased toward basic and acidic residues. A compositionally biased stretch (polar residues) spans 199–208 (SNISGWWSSD). Phosphoserine is present on residues serine 206 and serine 207. Arginine 290 is subject to Omega-N-methylarginine. The disordered stretch occupies residues 342 to 396 (TTLLSPRDMDSTAEGPIPCRRMRSGSYIKAMGDEDSDESGGGSPKPSPKTAARRQ). Phosphoserine is present on residues serine 377, serine 380, serine 384, serine 388, serine 405, serine 415, and serine 421. Disordered stretches follow at residues 527–751 (SVSL…GPRQ), 763–798 (SYGD…AQPG), and 915–992 (TPEK…QTRL). Low complexity predominate over residues 528–554 (VSLQSLSPPPSTGSLSNSRTLPSSSCL). Polar residues predominate over residues 576–591 (VTVQSSTESAQDTYLD). Residues serine 580, serine 581, serine 609, serine 611, serine 665, and serine 744 each carry the phosphoserine modification. Residues 600–620 (TSQSGLSNSSDSLDSSTRPPS) are compositionally biased toward low complexity. Residue threonine 915 is modified to Phosphothreonine. Composition is skewed to basic and acidic residues over residues 915 to 925 (TPEKRKEEKKP) and 940 to 958 (VSRD…EARK). Residues 969 to 978 (VRQNSATESA) are compositionally biased toward polar residues. The residue at position 973 (serine 973) is a Phosphoserine.

This sequence belongs to the SAPAP family. Interacts with DLG1 and DLG4/PSD-95.

The protein localises to the membrane. In terms of biological role, may play a role in the molecular organization of synapses and neuronal cell signaling. Could be an adapter protein linking ion channel to the subsynaptic cytoskeleton. May induce enrichment of PSD-95/SAP90 at the plasma membrane. This is Disks large-associated protein 4 (Dlgap4) from Mus musculus (Mouse).